A 125-amino-acid polypeptide reads, in one-letter code: Small ribosomal subunit protein uS13 (125 aa).

Positions glycine 95–lysine 125 are disordered. The segment covering threonine 105–lysine 125 has biased composition (basic residues).

This sequence belongs to the universal ribosomal protein uS13 family. Part of the 30S ribosomal subunit. Forms a loose heterodimer with protein S19. Forms two bridges to the 50S subunit in the 70S ribosome.

Functionally, located at the top of the head of the 30S subunit, it contacts several helices of the 16S rRNA. In the 70S ribosome it contacts the 23S rRNA (bridge B1a) and protein L5 of the 50S subunit (bridge B1b), connecting the 2 subunits; these bridges are implicated in subunit movement. Contacts the tRNAs in the A and P-sites. The chain is Small ribosomal subunit protein uS13 from Leptospira interrogans serogroup Icterohaemorrhagiae serovar copenhageni (strain Fiocruz L1-130).